The following is a 334-amino-acid chain: N,N'-diacetyllegionaminic acid synthase (334 aa).

The AFP-like domain occupies 282–334 (SLVAKKDIKKGEIFSEGNLTTKRPANGISAMRYEEFLGKIATKNYKEDELIRE).

It catalyses the reaction 2,4-diacetamido-2,4,6-trideoxy-alpha-D-mannopyranose + phosphoenolpyruvate + H2O = N,N-diacetyllegionaminate + phosphate. Its function is as follows. Involved in biosynthesis of legionaminic acid (5,7-diamino-3,5,7,9-tetradeoxy-D-glycero-D-galacto-non-2-ulosonic acid)(Leg), a sialic acid-like derivative that is incorporated into flagellin via O-linkage to Ser/Thr. Catalyzes the condensation of 2,4-diacetamido-2,4,6-trideoxymannose with phosphoenolpyruvate (PEP) to give N,N'-diacetyllegionaminic acid. This is N,N'-diacetyllegionaminic acid synthase (legI) from Campylobacter jejuni subsp. jejuni serotype O:2 (strain ATCC 700819 / NCTC 11168).